The sequence spans 450 residues: 3',5'-cyclic-AMP phosphodiesterase 7B (450 aa).

In terms of domain architecture, PDEase spans 97-420 (LDEDYLGQAR…AQWKSLLPRQ (324 aa)). His-173 (proton donor) is an active-site residue. A divalent metal cation-binding residues include His-177, His-213, Asp-214, and Asp-323. Residues 418–450 (PRQHRSRGSSGSGPDHDHAGQGTESEEQEGDSP) are disordered. Ser-426 carries the post-translational modification Phosphoserine. Positions 441–450 (ESEEQEGDSP) are enriched in acidic residues.

The protein belongs to the cyclic nucleotide phosphodiesterase family. PDE7 subfamily. Requires a divalent metal cation as cofactor. In terms of tissue distribution, highly expressed in brain. Also expressed in heart, liver, skeletal muscle and pancreas.

The catalysed reaction is 3',5'-cyclic AMP + H2O = AMP + H(+). It functions in the pathway purine metabolism; 3',5'-cyclic AMP degradation; AMP from 3',5'-cyclic AMP: step 1/1. Its activity is regulated as follows. Inhibited by dipyridamole, IBMX and SCH 51866. Insensitive to zaprinast, rolipram, and milrinone. Hydrolyzes the second messenger cAMP, which is a key regulator of many important physiological processes. May be involved in the control of cAMP-mediated neural activity and cAMP metabolism in the brain. This is 3',5'-cyclic-AMP phosphodiesterase 7B from Homo sapiens (Human).